A 444-amino-acid polypeptide reads, in one-letter code: Orexin receptor type 2 (444 aa).

Over residues 1–10 the composition is skewed to basic and acidic residues; the sequence is MSGTKLEDSP. The segment at 1-30 is disordered; it reads MSGTKLEDSPPCRNWSSAPELNETQEPFLN. The Extracellular portion of the chain corresponds to 1-54; sequence MSGTKLEDSPPCRNWSSAPELNETQEPFLNPTDYDDEEFLRYLWREYLHPKEYE. 2 N-linked (GlcNAc...) asparagine glycosylation sites follow: Asn14 and Asn22. Residues 14 to 27 are compositionally biased toward polar residues; it reads NWSSAPELNETQEP. Residues 33-49 form a required for response to orexin-A region; the sequence is DYDDEEFLRYLWREYLH. A helical transmembrane segment spans residues 55-75; it reads WVLIAGYIIVFVVALVGNVLV. Over 76–88 the chain is Cytoplasmic; that stretch reads CVAVWKNHHMRTV. A helical transmembrane segment spans residues 89 to 110; the sequence is TNYFIVNLSLADVLVTITCLPA. The Extracellular portion of the chain corresponds to 111–127; sequence TLVVDITETWFFGQSLC. Residues Cys127 and Cys210 are joined by a disulfide bond. The chain crosses the membrane as a helical span at residues 128–150; that stretch reads KVIPYLQTVSVSVSVLTLSCIAL. Residues 151–170 are Cytoplasmic-facing; that stretch reads DRWYAICHPLMFKSTAKRAR. The helical transmembrane segment at 171-191 threads the bilayer; sequence NSIVIIWIVSCIIMIPQAIVM. Topologically, residues 192–222 are extracellular; that stretch reads ECSTMLPGLANKTTLFTVCDERWGGEIYPKM. A glycan (N-linked (GlcNAc...) asparagine) is linked at Asn202. A helical membrane pass occupies residues 223–243; the sequence is YHICFFLVTYMAPLCLMVLAY. Topologically, residues 244 to 304 are cytoplasmic; that stretch reads LQIFRKLWCR…QIRARRKTAR (61 aa). The chain crosses the membrane as a helical span at residues 305-326; the sequence is MLMVVLLVFAICYLPISILNVL. Over 327-342 the chain is Extracellular; that stretch reads KRVFGMFTHTEDRETV. A helical transmembrane segment spans residues 343–366; sequence YAWFTFSHWLVYANSAANPIIYNF. The Cytoplasmic segment spans residues 367 to 444; the sequence is LSGKFREEFK…ANGAGPLQNW (78 aa).

This sequence belongs to the G-protein coupled receptor 1 family.

The protein resides in the cell membrane. Nonselective, high-affinity receptor for both orexin-A and orexin-B neuropeptides. Triggers an increase in cytoplasmic Ca(2+) levels in response to orexin-A binding. The chain is Orexin receptor type 2 (HCRTR2) from Canis lupus familiaris (Dog).